The following is a 252-amino-acid chain: Small ribosomal subunit protein uS3 (252 aa).

The KH type-2 domain occupies 38–106; the sequence is IRKYIHARLS…EVQINIFEIK (69 aa). Residues 214–252 form a disordered region; sequence PLAGMDKKQSGTGGGKGGDAPRGKSNFNKGGKPDARKRK. The span at 224-233 shows a compositional bias: gly residues; the sequence is GTGGGKGGDA.

Belongs to the universal ribosomal protein uS3 family. Part of the 30S ribosomal subunit. Forms a tight complex with proteins S10 and S14.

Functionally, binds the lower part of the 30S subunit head. Binds mRNA in the 70S ribosome, positioning it for translation. The polypeptide is Small ribosomal subunit protein uS3 (Flavobacterium johnsoniae (strain ATCC 17061 / DSM 2064 / JCM 8514 / BCRC 14874 / CCUG 350202 / NBRC 14942 / NCIMB 11054 / UW101) (Cytophaga johnsonae)).